Consider the following 125-residue polypeptide: Egg cell-secreted protein 1.3 (125 aa).

A signal peptide spans 1–24; that stretch reads MASNTSFLFVTVTLLLVLNVSSRA.

Belongs to the plant egg cell-secreted peptide family. In terms of tissue distribution, restricted to female reproductive tissues, specifically accumulating in storage vesicles of the unfertilized egg cell.

The protein localises to the cytoplasmic vesicle. The protein resides in the secreted. Involved in the regulation of gamete interactions during the double fertilization and to prevent multiple-pollen tube attraction; mediates the redistribution of the gamete fusogen HAP2/GCS1 to the cell surface after secretion upon sperm arrival. The polypeptide is Egg cell-secreted protein 1.3 (EC1.3) (Arabidopsis thaliana (Mouse-ear cress)).